We begin with the raw amino-acid sequence, 460 residues long: MPGIAMDGLSKLEAESERLTATIKSYVRHRRDVESSDQLRASPDANMEASRTKSVILASIANIKALLGGPVELLQDLARQVEIVACLRWLAEYQILACIPAEGGMSIQDLADLAGVPDIQLRRVIRLVGTSGFLQEPMPNYVSHTPLSAQFVTNQSWLDAAVFMAELAAPTALHMPAATHRFGGSRHPTETAYNLALNSLQPFGAAIQERPKLGRQWSAYLHHAVGLHQEKKIADMLSQLKWSSLGNSFVVEVGAQSTSMAHHLANKFPTLHLIVQIDRSRASRLNPDYLWPGEMMNGLTRDFTPQPESSPRPGSASSRVTVTYRSASMPQPVVDAAVYILHVPVLSTNSPAGADAMETVKTELQDYLGILRATAGILLIPTANLLPEPGSLSDPNFEAVARTRDLNYLQLANEGEMEMTDLFSAIETTRDGLGRLVITNQLRSHIGLTVCLTLKHETYC.

The 72-residue stretch at 74–145 folds into the HTH iclR-type domain; that stretch reads LQDLARQVEI…EPMPNYVSHT (72 aa). Positions 107-126 form a DNA-binding region, H-T-H motif; the sequence is IQDLADLAGVPDIQLRRVIR. A disordered region spans residues 300–320; the sequence is TRDFTPQPESSPRPGSASSRV.

It localises to the nucleus. Functionally, transcription factor that probably regulates the expression of the gene cluster that mediates the biosynthesis of notoamide, a fungal indole alkaloid that belongs to a family of natural products containing a characteristic bicyclo[2.2.2]diazaoctane core. This is Notoamide biosynthesis cluster transcriptional coactivator notR from Aspergillus sp. (strain MF297-2).